Consider the following 94-residue polypeptide: Co-chaperonin GroES (94 aa).

Belongs to the GroES chaperonin family. In terms of assembly, heptamer of 7 subunits arranged in a ring. Interacts with the chaperonin GroEL.

Its subcellular location is the cytoplasm. Together with the chaperonin GroEL, plays an essential role in assisting protein folding. The GroEL-GroES system forms a nano-cage that allows encapsulation of the non-native substrate proteins and provides a physical environment optimized to promote and accelerate protein folding. GroES binds to the apical surface of the GroEL ring, thereby capping the opening of the GroEL channel. The protein is Co-chaperonin GroES of Streptococcus pneumoniae (strain Taiwan19F-14).